Here is a 434-residue protein sequence, read N- to C-terminus: Cytochrome P450 144 (434 aa).

Substrate contacts are provided by Asp124 and His128. Positions 132, 326, 383, and 385 each coordinate heme.

The protein belongs to the cytochrome P450 family. As to quaternary structure, monomer. Heme serves as cofactor.

This is Cytochrome P450 144 (cyp144) from Mycobacterium tuberculosis (strain CDC 1551 / Oshkosh).